The following is an 87-amino-acid chain: Putative regulatory protein CHY_1489 (87 aa).

The protein belongs to the RemA family.

This chain is Putative regulatory protein CHY_1489, found in Carboxydothermus hydrogenoformans (strain ATCC BAA-161 / DSM 6008 / Z-2901).